Consider the following 238-residue polypeptide: MEITEFRQRLEERGFSLSQAQLDQFEHYYHTLVEWNEKMNLTAITDKEGVYLKHFYDSLTAAFYVDFTKVATVVDVGAGAGFPSIPLKIVFPELRVTIVDSLKKRIGFLEHLSETLGLKGTAFYHDRAETFAQKKEHREQYDLVLARAVARLPVLSELCLPLAKVEGTFVAMKGAGANEELTAAQGALKKLGGSVIQNEQFTLPIEESERHVIIIRKERSTPKKYPRKPGTPNKQPLS.

Residues G77, F82, 128 to 129 (AE), and R147 each bind S-adenosyl-L-methionine. The disordered stretch occupies residues 216-238 (RKERSTPKKYPRKPGTPNKQPLS).

It belongs to the methyltransferase superfamily. RNA methyltransferase RsmG family.

The protein localises to the cytoplasm. Its function is as follows. Specifically methylates the N7 position of guanine in position 535 of 16S rRNA. This is Ribosomal RNA small subunit methyltransferase G from Halalkalibacterium halodurans (strain ATCC BAA-125 / DSM 18197 / FERM 7344 / JCM 9153 / C-125) (Bacillus halodurans).